The primary structure comprises 353 residues: Neutral protease 2 homolog AO090001000135 (353 aa).

Residues 1-19 form the signal peptide; that stretch reads MRFISVSSLLLALAPALNA. The propeptide occupies 20–176; it reads VPVEVAGSAQ…TQAVKILERR (157 aa). Cystine bridges form between cysteine 182/cysteine 254 and cysteine 261/cysteine 279. Residue histidine 304 coordinates Zn(2+). Residue glutamate 305 is part of the active site. The Zn(2+) site is built by histidine 308 and aspartate 319.

It belongs to the peptidase M35 family. Requires Zn(2+) as cofactor.

The protein localises to the secreted. The enzyme catalyses Preferential cleavage of bonds with hydrophobic residues in P1'. Also 3-Asn-|-Gln-4 and 8-Gly-|-Ser-9 bonds in insulin B chain.. Functionally, secreted metalloproteinase that allows assimilation of proteinaceous substrates. Shows high activities on basic nuclear substrates such as histone and protamine. The polypeptide is Neutral protease 2 homolog AO090001000135 (Aspergillus oryzae (strain ATCC 42149 / RIB 40) (Yellow koji mold)).